A 499-amino-acid polypeptide reads, in one-letter code: WD repeat-containing protein 55 homolog (499 aa).

The interval 1–130 is disordered; sequence MHTHNNFKTP…EATFDLDVDD (130 aa). Composition is skewed to acidic residues over residues 12–23 and 31–48; these read DEDELDDLDEDM and IEQE…EYDL. The segment covering 91–103 has biased composition (low complexity); it reads DDAGGASAGGATS. Residues 113-122 are compositionally biased toward polar residues; the sequence is PSGSNRQSEA. 6 WD repeats span residues 154–193, 198–237, 241–279, 282–321, 324–363, and 408–447; these read KLED…NKLL, VHSK…LKKL, AHDD…AIFE, ELED…MYVQ, PYEE…YHCD, and QHNM…DFGD. The disordered stretch occupies residues 480 to 499; it reads TKEDADDDDHDPSAGPSNMA.

This sequence belongs to the WD repeat WDR55 family.

The polypeptide is WD repeat-containing protein 55 homolog (Drosophila yakuba (Fruit fly)).